Reading from the N-terminus, the 272-residue chain is Type III pantothenate kinase (272 aa).

Residue 6 to 13 (DVRNTHTV) participates in ATP binding. 109-112 (GADR) serves as a coordination point for substrate. The active-site Proton acceptor is the D111. D131 lines the K(+) pocket. An ATP-binding site is contributed by S134. T186 lines the substrate pocket.

It belongs to the type III pantothenate kinase family. Homodimer. Requires NH4(+) as cofactor. It depends on K(+) as a cofactor.

It is found in the cytoplasm. The catalysed reaction is (R)-pantothenate + ATP = (R)-4'-phosphopantothenate + ADP + H(+). It functions in the pathway cofactor biosynthesis; coenzyme A biosynthesis; CoA from (R)-pantothenate: step 1/5. Functionally, catalyzes the phosphorylation of pantothenate (Pan), the first step in CoA biosynthesis. In Mycobacterium marinum (strain ATCC BAA-535 / M), this protein is Type III pantothenate kinase.